The primary structure comprises 289 residues: Glycine--tRNA ligase alpha subunit (289 aa).

Belongs to the class-II aminoacyl-tRNA synthetase family. Tetramer of two alpha and two beta subunits.

The protein resides in the cytoplasm. The catalysed reaction is tRNA(Gly) + glycine + ATP = glycyl-tRNA(Gly) + AMP + diphosphate. The protein is Glycine--tRNA ligase alpha subunit of Rickettsia akari (strain Hartford).